The primary structure comprises 316 residues: Transaldolase (316 aa).

The Schiff-base intermediate with substrate role is filled by Lys-132.

Belongs to the transaldolase family. Type 1 subfamily. As to quaternary structure, homodimer.

Its subcellular location is the cytoplasm. It catalyses the reaction D-sedoheptulose 7-phosphate + D-glyceraldehyde 3-phosphate = D-erythrose 4-phosphate + beta-D-fructose 6-phosphate. The protein operates within carbohydrate degradation; pentose phosphate pathway; D-glyceraldehyde 3-phosphate and beta-D-fructose 6-phosphate from D-ribose 5-phosphate and D-xylulose 5-phosphate (non-oxidative stage): step 2/3. Transaldolase is important for the balance of metabolites in the pentose-phosphate pathway. The polypeptide is Transaldolase (Vibrio vulnificus (strain CMCP6)).